A 430-amino-acid chain; its full sequence is Glutamate-1-semialdehyde 2,1-aminomutase (430 aa).

Lys-265 is subject to N6-(pyridoxal phosphate)lysine.

The protein belongs to the class-III pyridoxal-phosphate-dependent aminotransferase family. HemL subfamily. In terms of assembly, homodimer. It depends on pyridoxal 5'-phosphate as a cofactor.

Its subcellular location is the cytoplasm. It carries out the reaction (S)-4-amino-5-oxopentanoate = 5-aminolevulinate. The protein operates within porphyrin-containing compound metabolism; protoporphyrin-IX biosynthesis; 5-aminolevulinate from L-glutamyl-tRNA(Glu): step 2/2. The protein is Glutamate-1-semialdehyde 2,1-aminomutase (hemL) of Helicobacter pylori (strain ATCC 700392 / 26695) (Campylobacter pylori).